A 227-amino-acid chain; its full sequence is tRNA (guanine-N(1)-)-methyltransferase (227 aa).

Residues G107 and 127 to 132 (LGDFIL) contribute to the S-adenosyl-L-methionine site.

Belongs to the RNA methyltransferase TrmD family. In terms of assembly, homodimer.

It is found in the cytoplasm. It catalyses the reaction guanosine(37) in tRNA + S-adenosyl-L-methionine = N(1)-methylguanosine(37) in tRNA + S-adenosyl-L-homocysteine + H(+). In terms of biological role, specifically methylates guanosine-37 in various tRNAs. The sequence is that of tRNA (guanine-N(1)-)-methyltransferase from Mesomycoplasma hyopneumoniae (strain 232) (Mycoplasma hyopneumoniae).